The chain runs to 163 residues: NADH-quinone oxidoreductase subunit I (163 aa).

4Fe-4S ferredoxin-type domains are found at residues 53 to 83 (LRRYPNGEERCIACKLCEAICPAQAITIEAG) and 94 to 123 (VRYDIDMVKCIYCGFCQEACPVDAIVEGPN). [4Fe-4S] cluster contacts are provided by Cys63, Cys66, Cys69, Cys73, Cys103, Cys106, Cys109, and Cys113.

This sequence belongs to the complex I 23 kDa subunit family. In terms of assembly, NDH-1 is composed of 14 different subunits. Subunits NuoA, H, J, K, L, M, N constitute the membrane sector of the complex. It depends on [4Fe-4S] cluster as a cofactor.

The protein resides in the cell inner membrane. It carries out the reaction a quinone + NADH + 5 H(+)(in) = a quinol + NAD(+) + 4 H(+)(out). Functionally, NDH-1 shuttles electrons from NADH, via FMN and iron-sulfur (Fe-S) centers, to quinones in the respiratory chain. The immediate electron acceptor for the enzyme in this species is believed to be ubiquinone. Couples the redox reaction to proton translocation (for every two electrons transferred, four hydrogen ions are translocated across the cytoplasmic membrane), and thus conserves the redox energy in a proton gradient. The protein is NADH-quinone oxidoreductase subunit I of Agrobacterium fabrum (strain C58 / ATCC 33970) (Agrobacterium tumefaciens (strain C58)).